The sequence spans 164 residues: Crossover junction endodeoxyribonuclease RuvC (164 aa).

Active-site residues include aspartate 7, glutamate 67, and aspartate 139. 3 residues coordinate Mg(2+): aspartate 7, glutamate 67, and aspartate 139.

Belongs to the RuvC family. In terms of assembly, homodimer which binds Holliday junction (HJ) DNA. The HJ becomes 2-fold symmetrical on binding to RuvC with unstacked arms; it has a different conformation from HJ DNA in complex with RuvA. In the full resolvosome a probable DNA-RuvA(4)-RuvB(12)-RuvC(2) complex forms which resolves the HJ. Mg(2+) is required as a cofactor.

It localises to the cytoplasm. It catalyses the reaction Endonucleolytic cleavage at a junction such as a reciprocal single-stranded crossover between two homologous DNA duplexes (Holliday junction).. Its function is as follows. The RuvA-RuvB-RuvC complex processes Holliday junction (HJ) DNA during genetic recombination and DNA repair. Endonuclease that resolves HJ intermediates. Cleaves cruciform DNA by making single-stranded nicks across the HJ at symmetrical positions within the homologous arms, yielding a 5'-phosphate and a 3'-hydroxyl group; requires a central core of homology in the junction. The consensus cleavage sequence is 5'-(A/T)TT(C/G)-3'. Cleavage occurs on the 3'-side of the TT dinucleotide at the point of strand exchange. HJ branch migration catalyzed by RuvA-RuvB allows RuvC to scan DNA until it finds its consensus sequence, where it cleaves and resolves the cruciform DNA. The protein is Crossover junction endodeoxyribonuclease RuvC of Geobacter metallireducens (strain ATCC 53774 / DSM 7210 / GS-15).